Here is an 82-residue protein sequence, read N- to C-terminus: High-potential iron-sulfur protein (82 aa).

4 residues coordinate [4Fe-4S] cluster: C42, C45, C60, and C74.

It belongs to the high-potential iron-sulfur protein (HiPIP) family. As to quaternary structure, homodimer.

The protein resides in the periplasm. Its function is as follows. Specific class of high-redox-potential 4Fe-4S ferredoxins. Functions in anaerobic electron transport in most purple and in some other photosynthetic bacteria and in at least one genus (Paracoccus) of halophilic, denitrifying bacteria. The sequence is that of High-potential iron-sulfur protein (hip) from Marichromatium purpuratum (Chromatium purpuratum).